The chain runs to 877 residues: Alpha-glucosidase (877 aa).

An N-terminal signal peptide occupies residues 1 to 23; the sequence is MATVGVLLLCLCLCLFAPRLCSS. The disordered stretch occupies residues 89–115; it reads VPQDIIPRPAPGDVLHDAPPASSAPLQ. N-linked (GlcNAc...) asparagine glycans are attached at residues asparagine 191, asparagine 298, asparagine 338, and asparagine 391. Catalysis depends on residues aspartate 437 and glutamate 440. A glycan (N-linked (GlcNAc...) asparagine) is linked at asparagine 471. Catalysis depends on aspartate 534, which acts as the Proton donor. The N-linked (GlcNAc...) asparagine glycan is linked to asparagine 570.

This sequence belongs to the glycosyl hydrolase 31 family. As to expression, high levels seen in the aleurone and scutellum after germination, while low levels are found in developing seeds.

It carries out the reaction Hydrolysis of terminal, non-reducing (1-&gt;4)-linked alpha-D-glucose residues with release of alpha-D-glucose.. This chain is Alpha-glucosidase, found in Hordeum vulgare (Barley).